Here is a 154-residue protein sequence, read N- to C-terminus: Large ribosomal subunit protein uL13 (154 aa).

Positions 132-154 (PHEAQQPEVLDVKSMNAKNTRSA) are disordered.

Belongs to the universal ribosomal protein uL13 family. As to quaternary structure, part of the 50S ribosomal subunit.

Its function is as follows. This protein is one of the early assembly proteins of the 50S ribosomal subunit, although it is not seen to bind rRNA by itself. It is important during the early stages of 50S assembly. In Paracoccus denitrificans (strain Pd 1222), this protein is Large ribosomal subunit protein uL13.